Reading from the N-terminus, the 497-residue chain is Solute carrier family 2, facilitated glucose transporter member 6 (497 aa).

The Cytoplasmic portion of the chain corresponds to 1-36; it reads MQEPLLRTEGLDYDTFPEVPATPGERERAGALKNRR. Residues 5 to 6 carry the Dileucine internalization motif motif; the sequence is LL. The helical transmembrane segment at 37–57 threads the bilayer; that stretch reads VFLATFAAVLGNFSFGYALVY. Over 58–80 the chain is Extracellular; the sequence is TSPVIPELKLSSDPALHLDKIQA. Residues 81–101 traverse the membrane as a helical segment; it reads SWFGSVFTLGAAAGGLSAMLL. The Cytoplasmic segment spans residues 102–115; that stretch reads NDLLGRKLSIMFSA. A helical membrane pass occupies residues 116-136; it reads VPSAIGYAIMAGARGLWMLLL. Residues 137–138 are Extracellular-facing; the sequence is GR. Residues 139–159 form a helical membrane-spanning segment; the sequence is MLTGFAGGLTAACIPVYVSEI. Residues 160 to 171 lie on the Cytoplasmic side of the membrane; sequence APPDVRGALGAT. Residues 172–192 traverse the membrane as a helical segment; it reads PQLMAVFGSLSLYALGLLLPW. Glutamine 173 contacts a D-hexose. A topological domain (extracellular) is located at residue arginine 193. Residues 194 to 214 form a helical membrane-spanning segment; sequence WLAVAGEGPVLIMILLLSFMP. The Cytoplasmic segment spans residues 215–273; that stretch reads NSPRFLLSKSRDEEALQALTWLRADSEVHWEFEQIQDNVRRQSSRVSWAEAREPRVYRP. A helical transmembrane segment spans residues 274–294; that stretch reads VLIAVLMRFLQQLTGITPILV. Position 284-285 (284-285) interacts with a D-hexose; that stretch reads QQ. The Extracellular segment spans residues 295–312; that stretch reads YLQTIFDNTSVVLPSQQD. Asparagine 302 carries N-linked (GlcNAc...) asparagine glycosylation. The chain crosses the membrane as a helical span at residues 313-333; sequence AAIVGAVRLLSVLIAAVTMDL. The Cytoplasmic portion of the chain corresponds to 334-337; it reads AGRK. A helical membrane pass occupies residues 338–358; the sequence is VLLYVSASVMFAANLTLGLYV. Topologically, residues 359-385 are extracellular; that stretch reads QFVPRPLTPNSTVEIVTLGDTAFNYLT. A glycan (N-linked (GlcNAc...) asparagine) is linked at asparagine 368. Residues 386-406 traverse the membrane as a helical segment; the sequence is LIPLLATMLFIMGYAMGWGPI. The Cytoplasmic portion of the chain corresponds to 407 to 425; it reads TWLLMSEVLPLRARGVASG. Tryptophan 408 is a binding site for a D-hexose. A helical transmembrane segment spans residues 426–446; sequence LCVLVSWLTAFVLTNYFLLAV. Position 447 (asparagine 447) is a topological domain, extracellular. A helical membrane pass occupies residues 448-468; that stretch reads AFGLQVPFFFFSAICLLSLLF. Topologically, residues 469-497 are cytoplasmic; the sequence is TGCCVPETRGRSLEQIEAFFHTRRMSFRP.

This sequence belongs to the major facilitator superfamily. Sugar transporter (TC 2.A.1.1) family. As to expression, mainly expressed in brain and spleen. Also expressed in lung, heart, muscle, liver, kidney, fat, whole blood, testes, ovaries and uterus.

Its subcellular location is the lysosome membrane. In terms of biological role, probable sugar transporter that acts as a regulator of glycolysis in macrophages. Does not transport glucose. The chain is Solute carrier family 2, facilitated glucose transporter member 6 from Mus musculus (Mouse).